Reading from the N-terminus, the 101-residue chain is Ubiquitin-related modifier 1 homolog 1 (101 aa).

1-thioglycine is present on G101. G101 is covalently cross-linked (Glycyl lysine isopeptide (Gly-Lys) (interchain with K-? in acceptor proteins)).

It belongs to the URM1 family. In terms of processing, C-terminal thiocarboxylation occurs in 2 steps, it is first acyl-adenylated (-COAMP) via the hesA/moeB/thiF part of the MOCS3 homolog, then thiocarboxylated (-COSH) via the rhodanese domain of the MOCS3 homolog.

It localises to the cytoplasm. Its pathway is tRNA modification; 5-methoxycarbonylmethyl-2-thiouridine-tRNA biosynthesis. Its function is as follows. Acts as a sulfur carrier required for 2-thiolation of mcm(5)S(2)U at tRNA wobble positions of cytosolic tRNA(Lys), tRNA(Glu) and tRNA(Gln). Serves as sulfur donor in tRNA 2-thiolation reaction by being thiocarboxylated (-COSH) at its C-terminus by MOCS3. The sulfur is then transferred to tRNA to form 2-thiolation of mcm(5)S(2)U. Also acts as a ubiquitin-like protein (UBL) that is covalently conjugated via an isopeptide bond to lysine residues of target proteins. The thiocarboxylated form serves as substrate for conjugation and oxidative stress specifically induces the formation of UBL-protein conjugates. The chain is Ubiquitin-related modifier 1 homolog 1 from Arabidopsis thaliana (Mouse-ear cress).